Here is a 555-residue protein sequence, read N- to C-terminus: 2-succinyl-5-enolpyruvyl-6-hydroxy-3-cyclohexene-1-carboxylate synthase (555 aa).

Belongs to the TPP enzyme family. MenD subfamily. Homodimer. The cofactor is Mg(2+). Mn(2+) is required as a cofactor. It depends on thiamine diphosphate as a cofactor.

It catalyses the reaction isochorismate + 2-oxoglutarate + H(+) = 5-enolpyruvoyl-6-hydroxy-2-succinyl-cyclohex-3-ene-1-carboxylate + CO2. Its pathway is quinol/quinone metabolism; 1,4-dihydroxy-2-naphthoate biosynthesis; 1,4-dihydroxy-2-naphthoate from chorismate: step 2/7. The protein operates within quinol/quinone metabolism; menaquinone biosynthesis. Its function is as follows. Catalyzes the thiamine diphosphate-dependent decarboxylation of 2-oxoglutarate and the subsequent addition of the resulting succinic semialdehyde-thiamine pyrophosphate anion to isochorismate to yield 2-succinyl-5-enolpyruvyl-6-hydroxy-3-cyclohexene-1-carboxylate (SEPHCHC). The protein is 2-succinyl-5-enolpyruvyl-6-hydroxy-3-cyclohexene-1-carboxylate synthase of Bacteroides thetaiotaomicron (strain ATCC 29148 / DSM 2079 / JCM 5827 / CCUG 10774 / NCTC 10582 / VPI-5482 / E50).